Consider the following 104-residue polypeptide: Protamine-2 (104 aa).

The disordered stretch occupies residues 1–91; it reads MVRYRMRSPS…RRGCRRSRRR (91 aa). A phosphoserine mark is found at Ser8, Ser10, and Ser33. Residues 33–44 show a composition bias toward basic and acidic residues; sequence SPERVEDYGRTE. Basic residues predominate over residues 45-91; sequence RGHHHRHRRCKRLHRIHKRRRSCRRRRRHSCRHRRRHRRGCRRSRRR.

This sequence belongs to the protamine P2 family. As to quaternary structure, interacts with TDRP. Post-translationally, proteolytic processing into mature chains is required for histone eviction during spermatogenesis. Transition proteins (TNP1 and TNP2) are required for processing. In terms of tissue distribution, testis.

It is found in the nucleus. It localises to the chromosome. In terms of biological role, protamines substitute for histones in the chromatin of sperm during the haploid phase of spermatogenesis. They compact sperm DNA into a highly condensed, stable and inactive complex. The chain is Protamine-2 (Prm2) from Rattus norvegicus (Rat).